The chain runs to 158 residues: Endoribonuclease YbeY (158 aa).

Residues H119, H123, and H129 each contribute to the Zn(2+) site.

It belongs to the endoribonuclease YbeY family. Zn(2+) is required as a cofactor.

The protein localises to the cytoplasm. Functionally, single strand-specific metallo-endoribonuclease involved in late-stage 70S ribosome quality control and in maturation of the 3' terminus of the 16S rRNA. This Acinetobacter baumannii (strain SDF) protein is Endoribonuclease YbeY.